Consider the following 35-residue polypeptide: 30 kDa neutral phosphatase (35 aa).

The span at 1 to 28 shows a compositional bias: polar residues; sequence KSSAEVQQTQQASIPASQKANLGNQNNI. Residues 1–35 are disordered; the sequence is KSSAEVQQTQQASIPASQKANLGNQNNIMXVAXYQ.

Its function is as follows. Highly cationic enzyme that can bind human or rat immunoglobulins as well as serum albumin, and could therefore be involved in post-infectious sequelae. The polypeptide is 30 kDa neutral phosphatase (Staphylococcus aureus).